A 567-amino-acid chain; its full sequence is UPF0313 protein CTN_0332 (567 aa).

Positions 288–560 constitute a Radical SAM core domain; that stretch reads KAIETVKFSI…NKMKENVLFK (273 aa). Residues Cys-303, Cys-307, and Cys-310 each contribute to the [4Fe-4S] cluster site.

It belongs to the UPF0313 family. It depends on [4Fe-4S] cluster as a cofactor.

The chain is UPF0313 protein CTN_0332 from Thermotoga neapolitana (strain ATCC 49049 / DSM 4359 / NBRC 107923 / NS-E).